Reading from the N-terminus, the 173-residue chain is Large ribosomal subunit protein uL10 (173 aa).

The protein belongs to the universal ribosomal protein uL10 family. As to quaternary structure, part of the ribosomal stalk of the 50S ribosomal subunit. The N-terminus interacts with L11 and the large rRNA to form the base of the stalk. The C-terminus forms an elongated spine to which L12 dimers bind in a sequential fashion forming a multimeric L10(L12)X complex.

Functionally, forms part of the ribosomal stalk, playing a central role in the interaction of the ribosome with GTP-bound translation factors. This Beutenbergia cavernae (strain ATCC BAA-8 / DSM 12333 / CCUG 43141 / JCM 11478 / NBRC 16432 / NCIMB 13614 / HKI 0122) protein is Large ribosomal subunit protein uL10.